The chain runs to 23 residues: Benzaldehyde dehydrogenase [NAD(+)] I (23 aa).

The protein belongs to the aldehyde dehydrogenase family. As to quaternary structure, homotetramer.

The enzyme catalyses benzaldehyde + NAD(+) + H2O = benzoate + NADH + 2 H(+). The chain is Benzaldehyde dehydrogenase [NAD(+)] I from Acinetobacter guillouiae (Acinetobacter genomosp. 11).